The following is a 239-amino-acid chain: Pentatricopeptide repeat-containing protein DWY1, chloroplastic (239 aa).

The transit peptide at 1–35 (MALEAAFSMSFCSFSVPKAIFCERETSSFQRITSR) directs the protein to the chloroplast. Disordered regions lie at residues 40–59 (AGESQVQSSDGVETQVKETS) and 101–122 (HISPSSHSTKVRGDKPEISGGE). Residues 111–122 (VRGDKPEISGGE) show a composition bias toward basic and acidic residues. A type E(+) motif region spans residues 113-144 (GDKPEISGGEKKAIVDRSKAYVKLKSLGKEVR). The segment at 145 to 239 (DAGYVPETKY…DGNCSCGDYW (95 aa)) is type DYW motif.

Belongs to the PPR family. PCMP-H subfamily. In terms of assembly, interacts with CRR4. Zn(2+) is required as a cofactor.

Its subcellular location is the plastid. The protein localises to the chloroplast. Functionally, plays a major role in single RNA editing events in chloroplasts. Acts as a site-recognition transacting factor involved in the edition of the site 1 of ndhD (ndhD-1 site corresponding to cytidine-2), which is a plastid-encoded subunit of the NADH-plastoquinone oxidoreductase. The interaction with CRR4 is required for its function in editing the ndhD-1 site. This chain is Pentatricopeptide repeat-containing protein DWY1, chloroplastic, found in Arabidopsis thaliana (Mouse-ear cress).